The sequence spans 195 residues: ATP-dependent Clp protease proteolytic subunit (195 aa).

Ser94 serves as the catalytic Nucleophile. The active site involves His119.

This sequence belongs to the peptidase S14 family. Component of the chloroplastic Clp protease core complex.

The protein localises to the plastid. Its subcellular location is the chloroplast stroma. The enzyme catalyses Hydrolysis of proteins to small peptides in the presence of ATP and magnesium. alpha-casein is the usual test substrate. In the absence of ATP, only oligopeptides shorter than five residues are hydrolyzed (such as succinyl-Leu-Tyr-|-NHMec, and Leu-Tyr-Leu-|-Tyr-Trp, in which cleavage of the -Tyr-|-Leu- and -Tyr-|-Trp bonds also occurs).. In terms of biological role, cleaves peptides in various proteins in a process that requires ATP hydrolysis. Has a chymotrypsin-like activity. Plays a major role in the degradation of misfolded proteins. The polypeptide is ATP-dependent Clp protease proteolytic subunit (Cycas taitungensis (Prince sago)).